We begin with the raw amino-acid sequence, 37 residues long: Large ribosomal subunit protein bL36 (37 aa).

It belongs to the bacterial ribosomal protein bL36 family.

In Micrococcus luteus (strain ATCC 4698 / DSM 20030 / JCM 1464 / CCM 169 / CCUG 5858 / IAM 1056 / NBRC 3333 / NCIMB 9278 / NCTC 2665 / VKM Ac-2230) (Micrococcus lysodeikticus), this protein is Large ribosomal subunit protein bL36.